Reading from the N-terminus, the 214-residue chain is SH3 domain-binding glutamic acid-rich protein (214 aa).

An SH3-binding motif is present at residues 61–67; that stretch reads NGIPLPP. Residues 101-214 form a disordered region; it reads PGSKVTKSEE…EEEAGEGEDS (114 aa). The segment covering 129–144 has biased composition (basic and acidic residues); that stretch reads GTEKAEKSGENEAQKE. Composition is skewed to acidic residues over residues 162 to 192 and 198 to 214; these read EGED…EAPE and EAEE…GEDS.

The protein belongs to the SH3BGR family.

This is SH3 domain-binding glutamic acid-rich protein (Sh3bgr) from Mus musculus (Mouse).